The following is a 233-amino-acid chain: Rab-like protein 3 (233 aa).

A small GTPase-like region spans residues 1 to 233 (MASLDRVKVL…RFNFKSLHSD (233 aa)). GTP-binding positions include 16–21 (GVGKSS), 148–150 (KFD), and 179–180 (DC).

Belongs to the small GTPase superfamily. Rab family. In terms of assembly, homodimer.

In terms of biological role, required for KRAS signaling regulation and modulation of cell proliferation. Regulator of KRAS prenylation, and probably prenylation of other small GTPases. Required for lymphocyte development and function. Not required for myeloid cell development. This chain is Rab-like protein 3 (rabl3), found in Danio rerio (Zebrafish).